Consider the following 104-residue polypeptide: Large ribosomal subunit protein bL21 (104 aa).

This sequence belongs to the bacterial ribosomal protein bL21 family. As to quaternary structure, part of the 50S ribosomal subunit. Contacts protein L20.

This protein binds to 23S rRNA in the presence of protein L20. The protein is Large ribosomal subunit protein bL21 of Streptococcus equi subsp. equi (strain 4047).